A 1134-amino-acid polypeptide reads, in one-letter code: Error-prone DNA polymerase (1134 aa).

Residues 1–33 (MSYHNPPIPWRELEGRISGRPAPHGHQESHADQ) are disordered.

Belongs to the DNA polymerase type-C family. DnaE2 subfamily.

It is found in the cytoplasm. The catalysed reaction is DNA(n) + a 2'-deoxyribonucleoside 5'-triphosphate = DNA(n+1) + diphosphate. Its function is as follows. DNA polymerase involved in damage-induced mutagenesis and translesion synthesis (TLS). It is not the major replicative DNA polymerase. The polypeptide is Error-prone DNA polymerase (Cutibacterium acnes (strain DSM 16379 / KPA171202) (Propionibacterium acnes)).